The sequence spans 583 residues: Ferredoxin--nitrite reductase, chloroplastic (583 aa).

Residues 1 to 22 (MSSLSVRFLSPPLFSSTPAWPR) constitute a chloroplast transit peptide. [4Fe-4S] cluster is bound by residues C461, C467, C502, and C506. Residue C506 participates in siroheme binding.

It belongs to the nitrite and sulfite reductase 4Fe-4S domain family. Monomer. Siroheme is required as a cofactor. [4Fe-4S] cluster serves as cofactor.

It localises to the plastid. The protein localises to the chloroplast. It catalyses the reaction 6 oxidized [2Fe-2S]-[ferredoxin] + NH4(+) + 2 H2O = nitrite + 6 reduced [2Fe-2S]-[ferredoxin] + 8 H(+). It participates in nitrogen metabolism; nitrate reduction (assimilation). The chain is Ferredoxin--nitrite reductase, chloroplastic (NIR1) from Betula pendula (European white birch).